A 1807-amino-acid polypeptide reads, in one-letter code: Triacetic acid lactone synthase cle1 (1807 aa).

One can recognise a Starter acyltransferase (SAT) domain in the interval 107 to 280; the sequence is LAPLTVIIHI…ANVPVNGRYH (174 aa). In terms of domain architecture, Ketosynthase family 3 (KS3) spans 385–795; that stretch reads DTSIAIIGAA…GNNTAIIICQ (411 aa). Active-site for beta-ketoacyl synthase activity residues include cysteine 540, histidine 675, and histidine 718. The Malonyl-CoA:ACP transacylase (MAT) domain occupies 919 to 1176; it reads SKAVYDSSYH…LGPCIWLEAG (258 aa). An N-terminal hotdog fold region spans residues 1272 to 1398; it reads PVIDGLISLE…GTVIVDDERT (127 aa). The PKS/mFAS DH domain maps to 1272 to 1573; sequence PVIDGLISLE…FIRTSTSALQ (302 aa). Histidine 1304 functions as the Proton acceptor; for dehydratase activity in the catalytic mechanism. Residues 1416–1573 form a C-terminal hotdog fold region; that stretch reads TVFSAPRGVA…FIRTSTSALQ (158 aa). Aspartate 1475 serves as the catalytic Proton donor; for dehydratase activity. Positions 1605–1679 constitute a Carrier 1 domain; that stretch reads ANVWSLTVNL…IICERITAQT (75 aa). Serine 1639 is modified (O-(pantetheine 4'-phosphoryl)serine). The tract at residues 1690–1720 is disordered; that stretch reads GNSTSNTTSSSSQCTPSSSFESDSDTQATEL. Low complexity predominate over residues 1692-1710; that stretch reads STSNTTSSSSQCTPSSSFE. One can recognise a Carrier 2 domain in the interval 1721–1797; sequence SLSAPTMEKV…DLHALVMRRG (77 aa). An O-(pantetheine 4'-phosphoryl)serine modification is found at serine 1757.

Requires pantetheine 4'-phosphate as cofactor.

It participates in secondary metabolite biosynthesis; terpenoid biosynthesis. Its function is as follows. Non-reducing polyketide synthase; part of the cluster A that mediates the biosynthesis of chevalone E and its oxidized derivatives that possess a unique five-membered lactone ring and can synergistically enhance the cytotoxicity of doxorubicin (DOX) in breast cancer cells. Within the pathway, cle1 takes part to the biosynthesis of the molecular scaffold via the synthesis the alpha-pyrone triacetic acid lactone (TAL) from one molecule of acetyl-CoA and two molecules of malonyl-CoA. The molecular scaffold is commonly biosynthesized by a series of enzymes including the non-reducing polyketide synthase (NR-PKS) cle1 that produces the alpha-pyrone triacetic acid lactone (TAL); The membrane-bound prenyltransferase cle5 that accepts TAL as its substrate to perform a C-3 geranylgeranylation reaction, in which the pathway-dedicated GGPS cle6 is required to provide GGPP, the other substrate of cle5; the FAD-dependent monooxygenase Cle3 that forms an (S)-epoxide ring at the terminal olefin of the geranylgeranyl group; and the terpene cyclase Cle7 that catalyzes the cyclization of the prenyl group that yields the pentacyclic pathway intermediate chevalone E. Chevalone E can derivatize into seven new oxidized analogs by the cytochrome P450 monooxygenases cle2 (acting at C-20) and cle4 (acting at C-11 and C-12). This Aspergillus versicolor protein is Triacetic acid lactone synthase cle1.